The sequence spans 416 residues: Caspase-9 (416 aa).

A CARD domain is found at 1–92 (MDEADRRLLR…DMLASFLRTN (92 aa)). At threonine 125 the chain carries Phosphothreonine; by MAPK1. Tyrosine 153 is modified (phosphotyrosine; by ABL1). Residues histidine 237 and cysteine 287 contribute to the active site. Residues 294–320 (HGFEVASTSPEDESPGSNPEPDATPFQ) are disordered. A phosphoserine mark is found at serine 302, serine 307, and serine 310. The propeptide occupies 316 to 330 (ATPFQEGLRTFDQLD). Arginine 355 is subject to (Microbial infection) ADP-riboxanated arginine.

This sequence belongs to the peptidase C14A family. Heterotetramer that consists of two anti-parallel arranged heterodimers, each one formed by a 35 kDa (p35) and a 10 kDa (p10) subunit. Caspase-9 and APAF1 bind to each other via their respective NH2-terminal CED-3 homologous domains in the presence of cytochrome C and ATP. Interacts (inactive form) with EFHD2. Interacts with HAX1. Interacts with BIRC2/c-IAP1, XIAP/BIRC4, BIRC5/survivin, BIRC6/bruce and BIRC7/livin. Interacts with ABL1 (via SH3 domain); the interaction is direct and increases in the response of cells to genotoxic stress and ABL1/c-Abl activation. Interacts with BCL2L10. Interacts with NleF from pathogenic E.coli. In terms of processing, cleavages at Asp-315 by granzyme B and at Asp-330 by caspase-3 generate the two active subunits. Caspase-8 and -10 can also be involved in these processing events. Post-translationally, phosphorylated at Thr-125 by MAPK1/ERK2. Phosphorylation at Thr-125 is sufficient to block caspase-9 processing and subsequent caspase-3 activation. Phosphorylation on Tyr-153 by ABL1/c-Abl; occurs in the response of cells to DNA damage. (Microbial infection) ADP-riboxanation by C.violaceum CopC blocks CASP9 processing, preventing CASP9 activation and ability to mediate intrinsic apoptosis. In terms of processing, ubiquitinated by BIRC6; this activity is inhibited by DIABLO/SMAC. As to expression, ubiquitous, with highest expression in the heart, moderate expression in liver, skeletal muscle, and pancreas. Low levels in all other tissues. Within the heart, specifically expressed in myocytes.

The enzyme catalyses Strict requirement for an Asp residue at position P1 and with a marked preference for His at position P2. It has a preferred cleavage sequence of Leu-Gly-His-Asp-|-Xaa.. With respect to regulation, inhibited by the effector protein NleF that is produced by pathogenic E.coli; this inhibits apoptosis. Inhibited by BIRC6; following inhibition of BIRC6-caspase binding by DIABLO/SMAC, BIRC6 is subjected to caspase cleavage, leading to an increase in active caspases. In terms of biological role, involved in the activation cascade of caspases responsible for apoptosis execution. Binding of caspase-9 to Apaf-1 leads to activation of the protease which then cleaves and activates effector caspases caspase-3 (CASP3) or caspase-7 (CASP7). Promotes DNA damage-induced apoptosis in a ABL1/c-Abl-dependent manner. Proteolytically cleaves poly(ADP-ribose) polymerase (PARP). Cleaves BIRC6 following inhibition of BIRC6-caspase binding by DIABLO/SMAC. Lacks activity is an dominant-negative inhibitor of caspase-9. The sequence is that of Caspase-9 (CASP9) from Homo sapiens (Human).